The primary structure comprises 637 residues: Chaperone protein HtpG (637 aa).

The interval M1–R345 is a; substrate-binding. Residues E346–K562 form a b region. Positions L563–K637 are c.

This sequence belongs to the heat shock protein 90 family. As to quaternary structure, homodimer.

The protein localises to the cytoplasm. Functionally, molecular chaperone. Has ATPase activity. This Shewanella oneidensis (strain ATCC 700550 / JCM 31522 / CIP 106686 / LMG 19005 / NCIMB 14063 / MR-1) protein is Chaperone protein HtpG.